A 347-amino-acid polypeptide reads, in one-letter code: Heat-inducible transcription repressor HrcA (347 aa).

It belongs to the HrcA family.

Negative regulator of class I heat shock genes (grpE-dnaK-dnaJ and groELS operons). Prevents heat-shock induction of these operons. In Rhodococcus jostii (strain RHA1), this protein is Heat-inducible transcription repressor HrcA.